The following is a 110-amino-acid chain: Flagellar hook-basal body complex protein FliE (110 aa).

This sequence belongs to the FliE family.

Its subcellular location is the bacterial flagellum basal body. This Ralstonia nicotianae (strain ATCC BAA-1114 / GMI1000) (Ralstonia solanacearum) protein is Flagellar hook-basal body complex protein FliE.